We begin with the raw amino-acid sequence, 267 residues long: Putative transcription factor Ovo-like 1 (267 aa).

4 consecutive C2H2-type zinc fingers follow at residues 118–140 (FTCR…MKCH), 146–168 (HLCT…VRTH), 174–197 (YKCS…KKIH), and 213–235 (YVCE…LKEH).

Expressed in fetal kidney, and also in adult pancreas and placenta. Not expressed in intestine, peripheral blood lymphocytes and ovary.

The protein resides in the nucleus. In terms of biological role, putative transcription factor. Involved in hair formation and spermatogenesis. May function in the differentiation and/or maintenance of the urogenital system. This chain is Putative transcription factor Ovo-like 1 (OVOL1), found in Homo sapiens (Human).